The sequence spans 140 residues: Nucleoside diphosphate kinase (140 aa).

6 residues coordinate ATP: K9, F57, R85, T91, R102, and N112. H115 serves as the catalytic Pros-phosphohistidine intermediate.

The protein belongs to the NDK family. In terms of assembly, homotetramer. Mg(2+) serves as cofactor.

It localises to the cytoplasm. It carries out the reaction a 2'-deoxyribonucleoside 5'-diphosphate + ATP = a 2'-deoxyribonucleoside 5'-triphosphate + ADP. The enzyme catalyses a ribonucleoside 5'-diphosphate + ATP = a ribonucleoside 5'-triphosphate + ADP. In terms of biological role, major role in the synthesis of nucleoside triphosphates other than ATP. The ATP gamma phosphate is transferred to the NDP beta phosphate via a ping-pong mechanism, using a phosphorylated active-site intermediate. The chain is Nucleoside diphosphate kinase from Chlorobium chlorochromatii (strain CaD3).